The sequence spans 254 residues: tRNA uridine(34) hydroxylase (254 aa).

The region spanning 123-217 is the Rhodanese domain; it reads QDPNVILLDT…YLESIPEGES (95 aa). The Cysteine persulfide intermediate role is filled by Cys177.

It belongs to the TrhO family.

The enzyme catalyses uridine(34) in tRNA + AH2 + O2 = 5-hydroxyuridine(34) in tRNA + A + H2O. Its function is as follows. Catalyzes oxygen-dependent 5-hydroxyuridine (ho5U) modification at position 34 in tRNAs. The sequence is that of tRNA uridine(34) hydroxylase from Legionella pneumophila (strain Lens).